Consider the following 201-residue polypeptide: Riboflavin synthase (201 aa).

2 Lumazine-binding repeats span residues methionine 1–histidine 97 and isoleucine 98–methionine 197. 2,4-dihydroxypteridine is bound by residues glycine 4–valine 6, cysteine 47–threonine 49, aspartate 62–threonine 67, glycine 101–valine 103, lysine 136, serine 145–threonine 147, and serine 162–threonine 167.

In terms of assembly, homotrimer.

It catalyses the reaction 2 6,7-dimethyl-8-(1-D-ribityl)lumazine + H(+) = 5-amino-6-(D-ribitylamino)uracil + riboflavin. It functions in the pathway cofactor biosynthesis; riboflavin biosynthesis; riboflavin from 2-hydroxy-3-oxobutyl phosphate and 5-amino-6-(D-ribitylamino)uracil: step 2/2. Catalyzes the dismutation of two molecules of 6,7-dimethyl-8-ribityllumazine, resulting in the formation of riboflavin and 5-amino-6-(D-ribitylamino)uracil. The chain is Riboflavin synthase (ribE) from Mycobacterium bovis (strain ATCC BAA-935 / AF2122/97).